A 388-amino-acid chain; its full sequence is Succinate--CoA ligase [ADP-forming] subunit beta (388 aa).

The region spanning 9–244 (KQLFARYGLP…QSQEDPREAQ (236 aa)) is the ATP-grasp domain. Residues lysine 46, 53 to 55 (GRG), glutamate 99, threonine 102, and glutamate 107 each bind ATP. Asparagine 199 and aspartate 213 together coordinate Mg(2+). Residues asparagine 264 and 321–323 (GIV) each bind substrate.

Belongs to the succinate/malate CoA ligase beta subunit family. Heterotetramer of two alpha and two beta subunits. Requires Mg(2+) as cofactor.

The catalysed reaction is succinate + ATP + CoA = succinyl-CoA + ADP + phosphate. It catalyses the reaction GTP + succinate + CoA = succinyl-CoA + GDP + phosphate. It functions in the pathway carbohydrate metabolism; tricarboxylic acid cycle; succinate from succinyl-CoA (ligase route): step 1/1. Succinyl-CoA synthetase functions in the citric acid cycle (TCA), coupling the hydrolysis of succinyl-CoA to the synthesis of either ATP or GTP and thus represents the only step of substrate-level phosphorylation in the TCA. The beta subunit provides nucleotide specificity of the enzyme and binds the substrate succinate, while the binding sites for coenzyme A and phosphate are found in the alpha subunit. In Shigella dysenteriae serotype 1 (strain Sd197), this protein is Succinate--CoA ligase [ADP-forming] subunit beta.